The sequence spans 559 residues: MGSSGDAWKLKDHPKLPKGKTVAVIVLDGWGEAKPNEFNAIHVAETPVMYSLKNGAPEKWRLIKAHGNAVGLPTEDDMGNSEVGHNALGAGRIFAQGAKLVDLALASGKIYEGEGFKYVKECFEKGTLHLIGLLSDGGVHSRLDQVQLLLKGAAKHGAKRIRVHALTDGRDVLDGSSVGFMETLENSLAQLREKGIDAQVASGGGRMYVTMDRYENDWDVVKRGWDAQVLGEAPHKFKDPVEAVKKLRQEPNANDQYLAPFVIVDDNGKPVAAILDGDAVVTFNFRADRMVMLAKALEYENFDKFDRVRVPKIRYAGMLQYHGELQLPSHYLVSPPEIARHSGEYLVRNGVRTFACSETVKFGHVTFFWNGNRSGYFNEKLEEYVEIPSDSGITFNVKPKMKALEIAERTRDAILSGKFDQVRVNLPNGDMVGHTGDIKATIEACKSADEAVKMILEAIEQVGGIYLVTADHGNAEDMVKRNKKGEPALDKNGNIQILTSHTCEPVPIAIGGPGLAPGVRFRQDLPTGGLANVAATFMNLHGSEAPSDYEPSLIEVVDN.

Positions 28 and 81 each coordinate Mn(2+). The active-site Phosphoserine intermediate is the Ser81. Substrate contacts are provided by residues His140, 170-171 (RD), Arg206, Arg213, 286-289 (RADR), and Lys361. Mn(2+)-binding residues include Asp430, His434, Asp471, His472, and His501.

The protein belongs to the BPG-independent phosphoglycerate mutase family. Monomer. Requires Mn(2+) as cofactor. Found ubiquitously in germinating seed.

It localises to the cytoplasm. It catalyses the reaction (2R)-2-phosphoglycerate = (2R)-3-phosphoglycerate. It functions in the pathway carbohydrate degradation; glycolysis; pyruvate from D-glyceraldehyde 3-phosphate: step 3/5. Functionally, catalyzes the interconversion of 2-phosphoglycerate and 3-phosphoglycerate. This is 2,3-bisphosphoglycerate-independent phosphoglycerate mutase from Nicotiana tabacum (Common tobacco).